Here is a 118-residue protein sequence, read N- to C-terminus: NADH-quinone oxidoreductase subunit A 2 (118 aa).

Helical transmembrane passes span 5-25, 60-80, and 87-107; these read YLPI…SLVF, FYII…LYPW, and LGMF…VGYI.

Belongs to the complex I subunit 3 family. As to quaternary structure, NDH-1 is composed of 14 different subunits. Subunits NuoA, H, J, K, L, M, N constitute the membrane sector of the complex.

The protein resides in the cell inner membrane. The enzyme catalyses a quinone + NADH + 5 H(+)(in) = a quinol + NAD(+) + 4 H(+)(out). Functionally, NDH-1 shuttles electrons from NADH, via FMN and iron-sulfur (Fe-S) centers, to quinones in the respiratory chain. The immediate electron acceptor for the enzyme in this species is believed to be ubiquinone. Couples the redox reaction to proton translocation (for every two electrons transferred, four hydrogen ions are translocated across the cytoplasmic membrane), and thus conserves the redox energy in a proton gradient. This is NADH-quinone oxidoreductase subunit A 2 from Geobacter metallireducens (strain ATCC 53774 / DSM 7210 / GS-15).